Here is a 156-residue protein sequence, read N- to C-terminus: Small ribosomal subunit protein uS7A/uS7B (156 aa).

This sequence belongs to the universal ribosomal protein uS7 family. As to quaternary structure, part of the 30S ribosomal subunit. Contacts proteins S9 and S11.

In terms of biological role, one of the primary rRNA binding proteins, it binds directly to 16S rRNA where it nucleates assembly of the head domain of the 30S subunit. Is located at the subunit interface close to the decoding center, probably blocks exit of the E-site tRNA. The sequence is that of Small ribosomal subunit protein uS7A/uS7B from Bartonella bacilliformis (strain ATCC 35685 / KC583 / Herrer 020/F12,63).